The primary structure comprises 576 residues: Arginine--tRNA ligase (576 aa).

The 'HIGH' region motif lies at 122-132; the sequence is PNVAKQMHVGH.

It belongs to the class-I aminoacyl-tRNA synthetase family. Monomer.

It is found in the cytoplasm. The catalysed reaction is tRNA(Arg) + L-arginine + ATP = L-arginyl-tRNA(Arg) + AMP + diphosphate. The polypeptide is Arginine--tRNA ligase (Photorhabdus laumondii subsp. laumondii (strain DSM 15139 / CIP 105565 / TT01) (Photorhabdus luminescens subsp. laumondii)).